The primary structure comprises 424 residues: Histidinol dehydrogenase (424 aa).

3 residues coordinate NAD(+): Tyr-121, Gln-183, and Asn-206. Residues Ser-229, Gln-251, and His-254 each coordinate substrate. Zn(2+) contacts are provided by Gln-251 and His-254. Residues Glu-319 and His-320 each act as proton acceptor in the active site. Substrate is bound by residues His-320, Asp-353, Glu-407, and His-412. Asp-353 contacts Zn(2+). His-412 provides a ligand contact to Zn(2+).

The protein belongs to the histidinol dehydrogenase family. Requires Zn(2+) as cofactor.

It catalyses the reaction L-histidinol + 2 NAD(+) + H2O = L-histidine + 2 NADH + 3 H(+). It participates in amino-acid biosynthesis; L-histidine biosynthesis; L-histidine from 5-phospho-alpha-D-ribose 1-diphosphate: step 9/9. Its function is as follows. Catalyzes the sequential NAD-dependent oxidations of L-histidinol to L-histidinaldehyde and then to L-histidine. This chain is Histidinol dehydrogenase, found in Halalkalibacterium halodurans (strain ATCC BAA-125 / DSM 18197 / FERM 7344 / JCM 9153 / C-125) (Bacillus halodurans).